Consider the following 400-residue polypeptide: NADH dehydrogenase-like protein Rv1812c (400 aa).

It belongs to the NADH dehydrogenase family. It depends on FAD as a cofactor.

The protein is NADH dehydrogenase-like protein Rv1812c of Mycobacterium tuberculosis (strain ATCC 25618 / H37Rv).